Here is a 631-residue protein sequence, read N- to C-terminus: KIF-binding protein (631 aa).

Residues 60-70 show a composition bias toward acidic residues; the sequence is EQGEAGDEADC. The tract at residues 60 to 88 is disordered; that stretch reads EQGEAGDEADCESSQTADGEPEDGFEKTF.

This sequence belongs to the KIF-binding protein family. In terms of tissue distribution, at 30 hpf, primarily expressed in central and peripheral neurons.

Its subcellular location is the cytoplasm. It is found in the cytoskeleton. Activator of KIF1B plus-end-directed microtubule motor activity. Required for organization of axonal microtubules, and axonal outgrowth and maintenance during peripheral and central nervous system development. The protein is KIF-binding protein (kifbp) of Danio rerio (Zebrafish).